The sequence spans 399 residues: Subtilisin-like protease CPC735_033790 (399 aa).

Residues 1 to 20 form the signal peptide; the sequence is MGFLSSAILLLITAFPAAQA. Positions 21–117 are excised as a propeptide; it reads GEMINAAAGA…VEPDRMVNIT (97 aa). Positions 37 to 116 constitute an Inhibitor I9 domain; it reads SYIVVMNEGI…YVEPDRMVNI (80 aa). N115 is a glycosylation site (N-linked (GlcNAc...) asparagine). The Peptidase S8 domain maps to 127 to 399; sequence SYGLGRISNK…NRLLYNNSGV (273 aa). Active-site charge relay system residues include D159 and H190. N251 carries N-linked (GlcNAc...) asparagine glycosylation. S345 serves as the catalytic Charge relay system. N395 is a glycosylation site (N-linked (GlcNAc...) asparagine).

The protein belongs to the peptidase S8 family.

It is found in the secreted. Secreted subtilisin-like serine protease with keratinolytic activity that contributes to pathogenicity. The chain is Subtilisin-like protease CPC735_033790 from Coccidioides posadasii (strain C735) (Valley fever fungus).